A 222-amino-acid chain; its full sequence is Glutathione S-transferase (222 aa).

Positions 3 to 83 (GKPKLHYTRG…YIAGKYNLYG (81 aa)) constitute a GST N-terminal domain. Residues Y9, R45, 54 to 55 (QV), and 67 to 68 (QS) contribute to the glutathione site. In terms of domain architecture, GST C-terminal spans 85–208 (DLKERAWIDM…QPGSQRKPPL (124 aa)).

It belongs to the GST superfamily. Alpha family. As to quaternary structure, homodimer.

It localises to the cytoplasm. It carries out the reaction RX + glutathione = an S-substituted glutathione + a halide anion + H(+). Conjugation of reduced glutathione to a wide number of exogenous and endogenous hydrophobic electrophiles. The protein is Glutathione S-transferase of Gallus gallus (Chicken).